Here is a 1736-residue protein sequence, read N- to C-terminus: Collagen alpha-2(XI) chain (1736 aa).

Positions 1–27 (MERCSRCHRLLLFLPLVLGLSAAPGWA) are cleaved as a signal peptide. The 172-residue stretch at 57–228 (DVAYRVARPA…QSCGQKDLEC (172 aa)) folds into the Laminin G-like domain. A nonhelical region region spans residues 215–486 (QAAYQSCGQK…ILQQARLALR (272 aa)). Disordered stretches follow at residues 228–270 (CERE…PTES), 364–465 (LSAE…DKGP), and 485–1538 (LRGP…GSPA). Residues 258-269 (PQSQEPQKQPTE) are compositionally biased toward polar residues. 3 consecutive Collagen-like domains span residues 399 to 447 (GPPG…GPPG), 487 to 545 (GPPG…ADGA), and 546 to 583 (RGMPGEPGMKGDRGFDGLPGLPGEKGQRGDTGAQGLPG). The segment at 487–1500 (GPPGPMGYTG…PGHPGPPGEV (1014 aa)) is triple-helical region. Over residues 497 to 533 (RPGPLGQPGSPGLKGESGDLGPQGPRGPQGLTGPPGK) the composition is skewed to low complexity. Pro residues predominate over residues 615-624 (KGPPGIPGPP). Positions 650–668 (QQGTPGAQGLPGPQGAIGP) are enriched in low complexity. The Collagen-like 4 domain occupies 682-737 (GMPGSDGLPGHPGKEGPPGTKGNQGPSGPQGPLGYPGPRGVKGVDGIRGLKGHKGE). Residues 765 to 774 (RGEDGPEGPK) show a composition bias toward basic and acidic residues. 2 stretches are compositionally biased toward low complexity: residues 776-789 (RTGPTGDPGPTGLM) and 842-861 (PTGPRGQRGPRGATGKSGAK). Collagen-like domains follow at residues 868-924 (GPHG…PGPP), 967-1025 (GDPG…AAGS), 1026-1055 (GGPIGPPGRPGPQGPPGAAGEKGVPGEKGP), 1056-1086 (IGPTGRDGVQGPVGLPGPAGPPGVAGEDGDK), and 1114-1172 (GPVG…ETGD). A compositionally biased stretch (gly residues) spans 994 to 1003 (GTAGGPGLKG). Residues 1029-1040 (IGPPGRPGPQGP) show a composition bias toward pro residues. Low complexity-rich tracts occupy residues 1115 to 1133 (PVGQPGAAGADGEPGARGP) and 1155 to 1164 (IGLQGLPGPS). Over residues 1176-1187 (MGPPGPPGPRGP) the composition is skewed to pro residues. Residues 1188–1197 (AGPNGADGPQ) show a composition bias toward low complexity. The span at 1198–1207 (GSPGGVGNLG) shows a compositional bias: gly residues. Low complexity predominate over residues 1217–1230 (ESGSPGVQGEPGVK). A compositionally biased stretch (basic and acidic residues) spans 1232-1241 (PRGERGEKGE). The span at 1256 to 1272 (PTGDNGPKGNPGPVGFP) shows a compositional bias: low complexity. Residues 1287-1296 (DGAKGDRGED) are compositionally biased toward basic and acidic residues. The segment covering 1376 to 1386 (QQGRPGATGQA) has biased composition (low complexity). Composition is skewed to pro residues over residues 1388–1397 (PPGPVGPPGL) and 1457–1467 (PGGPPGLPGPS). Collagen-like domains lie at 1393 to 1447 (GPPG…GETG) and 1448 to 1499 (IPGA…PPGE). Residues 1469–1481 (PKGAKGATGPAGP) show a composition bias toward low complexity. The propeptide at 1501–1736 (IQPLPIQMPK…VLLGPVCFMG (236 aa)) is C-terminal propeptide. Positions 1541-1735 (EEIFGSLDSL…GVLLGPVCFM (195 aa)) constitute a Fibrillar collagen NC1 domain. A disulfide bond links C1571 and C1603. Ca(2+) is bound by residues D1589, N1591, Q1592, C1594, and D1597. N1604 carries an N-linked (GlcNAc...) asparagine glycan. Disulfide bonds link C1612–C1733 and C1655–C1689.

This sequence belongs to the fibrillar collagen family. In terms of assembly, trimers composed of three different chains: alpha 1(XI), alpha 2(XI), and alpha 3(XI). Alpha 3(XI) is a post-translational modification of alpha 1(II). Alpha 1(V) can also be found instead of alpha 3(XI)=1(II). Prolines at the third position of the tripeptide repeating unit (G-X-Y) are hydroxylated in some or all of the chains.

It localises to the secreted. Its subcellular location is the extracellular space. The protein resides in the extracellular matrix. May play an important role in fibrillogenesis by controlling lateral growth of collagen II fibrils. The polypeptide is Collagen alpha-2(XI) chain (Col11a2) (Mus musculus (Mouse)).